Reading from the N-terminus, the 378-residue chain is uncharacterized protein (378 aa).

A run of 10 helical transmembrane segments spans residues 7-29 (VTPF…RLSQ), 33-55 (LFFV…YQII), 68-85 (VSYL…EFYT), 90-108 (SGSL…HLLL), 115-137 (PLTV…FLYL), 152-174 (LTVG…MLIM), 204-225 (NYKL…FLYL), 245-267 (IFLF…ASHA), 280-302 (LILY…PRIV), and 347-366 (FSPL…ALFL).

It is found in the cell membrane. This is an uncharacterized protein from Aquifex aeolicus (strain VF5).